The following is a 469-amino-acid chain: Swarming motility regulation sensor protein RssA (469 aa).

2 consecutive transmembrane segments (helical) span residues 12–32 (IIFQVLAILLLWGLLVAWVKY) and 167–187 (VPLLGILAAIIVTLLFTAYFS). One can recognise a Histidine kinase domain in the interval 245–459 (DAAHELRTPI…GFIIDLPESY (215 aa)). H248 is subject to Phosphohistidine; by autocatalysis.

It localises to the cell inner membrane. The catalysed reaction is ATP + protein L-histidine = ADP + protein N-phospho-L-histidine.. Functionally, member of the two-component regulatory system RssA/RssB involved in regulation of swarming motility which has been shown to be inhibited by saturated fatty acids. RssA/RssB regulates cellular fatty acid composition, hemolysin production and cell surface topography. RssA/RssB negatively regulates the activity of SlhBA. It can also act as a negative regulator for the control of the swarming initiation. This is Swarming motility regulation sensor protein RssA (rssA) from Serratia marcescens.